A 325-amino-acid polypeptide reads, in one-letter code: Tetraacyldisaccharide 4'-kinase (325 aa).

Residue 58-65 (TVGGSGKT) participates in ATP binding.

Belongs to the LpxK family.

The enzyme catalyses a lipid A disaccharide + ATP = a lipid IVA + ADP + H(+). The protein operates within glycolipid biosynthesis; lipid IV(A) biosynthesis; lipid IV(A) from (3R)-3-hydroxytetradecanoyl-[acyl-carrier-protein] and UDP-N-acetyl-alpha-D-glucosamine: step 6/6. Functionally, transfers the gamma-phosphate of ATP to the 4'-position of a tetraacyldisaccharide 1-phosphate intermediate (termed DS-1-P) to form tetraacyldisaccharide 1,4'-bis-phosphate (lipid IVA). The chain is Tetraacyldisaccharide 4'-kinase from Coxiella burnetii (strain RSA 331 / Henzerling II).